The primary structure comprises 579 residues: Effector protein HopAB3 (579 aa).

Disordered regions lie at residues 1 to 140 (MAGI…TGAV), 214 to 294 (VRQQ…NQVP), and 384 to 408 (PARA…PDSA). Residues 1-336 (MAGINGAGPS…LRAALERHIL (336 aa)) are host recognition; Pto interaction. Composition is skewed to low complexity over residues 23–39 (ASGG…SSNS), 89–101 (RPQE…APQA), 219–248 (ASAP…ESSS), 266–281 (NQRR…ASQR), and 384–402 (PARA…ATVS). Residues 337-579 (HRRPIPMDIA…IAKYAFRIVP (243 aa)) form an E3 ubiquitin-protein ligase region.

Belongs to the HopAB family. As to quaternary structure, interacts physically with plant cell Pto. Post-translationally, auto-ubiquitinated.

It is found in the secreted. Effector protein involved in gene-for-gene resistance in tomato plants. It is recognized by the host Pto resistance protein and elicits Pto and Prf-dependent hypersensitive response (HR) and programmed cell death (PCD), resulting in host immunity. In susceptible plants, acts as a virulence factor by suppressing PCD and HR-based plant immunity. This function requires its E3 ubiquitin ligase activity probably by recruiting E2 enzymes and transferring ubiquitin molecules to cellular proteins involved in regulation of PCD and targeting them for degradation. Enhances the development of disease symptoms and bacterial growth. This Pseudomonas syringae pv. tomato protein is Effector protein HopAB3 (hopAB3).